The primary structure comprises 83 residues: Sec-independent protein translocase protein TatA (83 aa).

A helical transmembrane segment spans residues 1–21 (MGGLSLPHLIVLALVVLILFG). The segment at 34 to 83 (KGIKSFKQGMNDEDSKPVTPPPAQIPPASLQQTPPPAQPAPQPTSTDQAQ) is disordered. Over residues 66–75 (TPPPAQPAPQ) the composition is skewed to pro residues.

The protein belongs to the TatA/E family. In terms of assembly, the Tat system comprises two distinct complexes: a TatABC complex, containing multiple copies of TatA, TatB and TatC subunits, and a separate TatA complex, containing only TatA subunits. Substrates initially bind to the TatABC complex, which probably triggers association of the separate TatA complex to form the active translocon.

The protein localises to the cell inner membrane. Its function is as follows. Part of the twin-arginine translocation (Tat) system that transports large folded proteins containing a characteristic twin-arginine motif in their signal peptide across membranes. TatA could form the protein-conducting channel of the Tat system. This chain is Sec-independent protein translocase protein TatA, found in Novosphingobium aromaticivorans (strain ATCC 700278 / DSM 12444 / CCUG 56034 / CIP 105152 / NBRC 16084 / F199).